The sequence spans 348 residues: uncharacterized protein (348 aa).

Its subcellular location is the virion. This is an uncharacterized protein from Acanthamoeba polyphaga mimivirus (APMV).